Reading from the N-terminus, the 398-residue chain is Protochlorophyllide reductase, chloroplastic (398 aa).

This sequence belongs to the short-chain dehydrogenases/reductases (SDR) family. POR subfamily.

The protein resides in the plastid. The protein localises to the chloroplast. The enzyme catalyses chlorophyllide a + NADP(+) = protochlorophyllide a + NADPH + H(+). The protein operates within porphyrin-containing compound metabolism; chlorophyll biosynthesis. Its function is as follows. Phototransformation of protochlorophyllide (Pchlide) to chlorophyllide (Chlide). The protein is Protochlorophyllide reductase, chloroplastic (POR1) of Daucus carota (Wild carrot).